The chain runs to 143 residues: Large ribosomal subunit protein uL16 (143 aa).

The segment covering 1–14 (MLTPKRVKWRRQHR) has biased composition (basic residues). Residues 1 to 23 (MLTPKRVKWRRQHRPDRAGKAKG) are disordered.

This sequence belongs to the universal ribosomal protein uL16 family. In terms of assembly, part of the 50S ribosomal subunit.

Binds 23S rRNA and is also seen to make contacts with the A and possibly P site tRNAs. The sequence is that of Large ribosomal subunit protein uL16 from Desulforudis audaxviator (strain MP104C).